Consider the following 165-residue polypeptide: Ubiquitin-fold modifier-conjugating enzyme 1 (165 aa).

Cysteine 116 acts as the Glycyl thioester intermediate in catalysis.

The protein belongs to the ubiquitin-conjugating enzyme family. UFC1 subfamily.

Its function is as follows. E2-like enzyme which forms an intermediate with UFM1 via a thioester linkage. This chain is Ubiquitin-fold modifier-conjugating enzyme 1, found in Drosophila virilis (Fruit fly).